The following is a 499-amino-acid chain: Fumarate hydratase 2 (499 aa).

The segment at 19–51 is disordered; the sequence is ADVTLKQEDEQQERRSYSTPFREERDTFGPIQV. Residues 23–45 show a composition bias toward basic and acidic residues; it reads LKQEDEQQERRSYSTPFREERDT. Residues 134–136, 164–167, 174–176, and Thr222 contribute to the substrate site; these read SGT, HPND, and SSN. The active-site Proton donor/acceptor is His223. The active site involves Ser353. Residues Ser354 and 359 to 361 contribute to the substrate site; that span reads KVN.

The protein belongs to the class-II fumarase/aspartase family. Fumarase subfamily. Homotetramer.

The protein resides in the cytoplasm. The protein localises to the cytosol. It catalyses the reaction (S)-malate = fumarate + H2O. Its activity is regulated as follows. Fumarate hydratase activity (fumarate to L-malate) is strongly inhibited by phosphoenolpyruvate, citrate, oxaloacetate, ATP and ADP. Malate dehydratase activity (malate to fumarate) is activated by oxaloacetate, Asn and Gln. Malate dehydratase activity (malate to fumarate) is inhibited by citrate, succinate, ADP and ATP. Functionally, cytosolic fumarate hydratase that catalyzes the reversible stereospecific interconversion of fumarate to L-malate. Catalyzes the dehydration of L-malate to fumarate in the cytosol: required for the massive fumarate accumulation during the day in plants grown under high nitrogen. Also required for acclimation of photosynthesis to cold: acts by mediating accumulation of fumarate at low temperature, leading to reduce accumulation of phosphorylated sugars. This chain is Fumarate hydratase 2, found in Arabidopsis thaliana (Mouse-ear cress).